We begin with the raw amino-acid sequence, 419 residues long: UDP-N-acetylglucosamine 1-carboxyvinyltransferase (419 aa).

22-23 is a phosphoenolpyruvate binding site; that stretch reads KN. R93 provides a ligand contact to UDP-N-acetyl-alpha-D-glucosamine. C117 acts as the Proton donor in catalysis. Residue C117 is modified to 2-(S-cysteinyl)pyruvic acid O-phosphothioketal. UDP-N-acetyl-alpha-D-glucosamine is bound by residues D307 and I329.

This sequence belongs to the EPSP synthase family. MurA subfamily.

Its subcellular location is the cytoplasm. The enzyme catalyses phosphoenolpyruvate + UDP-N-acetyl-alpha-D-glucosamine = UDP-N-acetyl-3-O-(1-carboxyvinyl)-alpha-D-glucosamine + phosphate. Its pathway is cell wall biogenesis; peptidoglycan biosynthesis. Its function is as follows. Cell wall formation. Adds enolpyruvyl to UDP-N-acetylglucosamine. The protein is UDP-N-acetylglucosamine 1-carboxyvinyltransferase of Shewanella denitrificans (strain OS217 / ATCC BAA-1090 / DSM 15013).